A 619-amino-acid chain; its full sequence is Chaperone protein HscA homolog (619 aa).

Belongs to the heat shock protein 70 family.

Its function is as follows. Chaperone involved in the maturation of iron-sulfur cluster-containing proteins. Has a low intrinsic ATPase activity which is markedly stimulated by HscB. The chain is Chaperone protein HscA homolog from Laribacter hongkongensis (strain HLHK9).